The chain runs to 741 residues: Lamin-B receptor (741 aa).

Positions 29-126 (RLRRPRRTED…TGSGSGSSLP (98 aa)) are disordered. Low complexity-rich tracts occupy residues 57 to 84 (TRRT…RTRA) and 109 to 126 (PRSS…SSLP). Phosphoserine is present on Ser111. The residue at position 135 (Thr135) is a Phosphothreonine. A Phosphoserine modification is found at Ser144. Residues 160 to 184 (TNTSSGAPNKAFNTSSVNSGNSFSR) are compositionally biased toward polar residues. The interval 160-194 (TNTSSGAPNKAFNTSSVNSGNSFSRTTTSSTTTTT) is disordered. Residues 185 to 194 (TTTSSTTTTT) are compositionally biased toward low complexity. A phosphoserine mark is found at Ser223 and Ser225. Polar residues predominate over residues 231–240 (LAGTPVTNTE). The disordered stretch occupies residues 231-277 (LAGTPVTNTEEGSRYSRSVSRSVYDDEKSSKRSYSTGEEDIDEEDEL). Residues Thr234 and Thr237 each carry the phosphothreonine modification. Ser243, Ser246, Ser248, Ser250, and Ser263 each carry phosphoserine. Thr266 bears the Phosphothreonine mark. Over residues 267 to 277 (GEEDIDEEDEL) the composition is skewed to acidic residues. Residue Ser284 is modified to Phosphoserine. Position 288 is a phosphothreonine (Thr288). Position 291 is a phosphoserine (Ser291). The residue at position 293 (Thr293) is a Phosphothreonine. Ser298 bears the Phosphoserine mark. A run of 8 helical transmembrane segments spans residues 308 to 328 (FGGW…VYYL), 363 to 383 (VVGA…LLPG), 402 to 422 (LTLL…VTFV), 429 to 449 (FCIF…WLVD), 497 to 517 (LSLV…LVWP), 543 to 563 (PATL…IIFE), 577 to 599 (YGCL…TKYF), and 604 to 624 (VPIS…LGLL). Phosphoserine is present on residues Ser640 and Ser642. The chain crosses the membrane as a helical span at residues 687–707 (MALRPAWPPVLGLSLIILLLL).

Belongs to the ERG4/ERG24 family. As to quaternary structure, interacts directly with LAM.

It is found in the nucleus inner membrane. Its function is as follows. Anchors the lamina and the heterochromatin to the inner nuclear membrane. The protein is Lamin-B receptor of Drosophila melanogaster (Fruit fly).